The sequence spans 63 residues: Large ribosomal subunit protein uL29 (63 aa).

It belongs to the universal ribosomal protein uL29 family.

The chain is Large ribosomal subunit protein uL29 from Flavobacterium psychrophilum (strain ATCC 49511 / DSM 21280 / CIP 103535 / JIP02/86).